Reading from the N-terminus, the 125-residue chain is UPF0231 protein HD_1708 (125 aa).

This sequence belongs to the UPF0231 family.

The polypeptide is UPF0231 protein HD_1708 (Haemophilus ducreyi (strain 35000HP / ATCC 700724)).